The following is a 946-amino-acid chain: DNA primase (946 aa).

Residues 596-626 (RDTEEDEDGKEDKNNVPDNGVFQKTTSSVDT) form a disordered region. Residues 617–626 (FQKTTSSVDT) show a composition bias toward polar residues. Residues 881–920 (CLNYTHRNPQETVQVFIDLRTEHSYALWASLWSRCFTKKC) form a CHC2-type zinc finger.

The protein belongs to the herpesviridae DNA primase family. Associates with the helicase and the primase-associated factor to form the helicase-primase factor.

It is found in the host nucleus. Its function is as follows. Essential component of the helicase/primase complex. Unwinds the DNA at the replication forks and generates single-stranded DNA for both leading and lagging strand synthesis. The primase initiates primer synthesis and thereby produces large amount of short RNA primers on the lagging strand that the polymerase elongates using dNTPs. In Human cytomegalovirus (strain AD169) (HHV-5), this protein is DNA primase (UL70).